The following is a 217-amino-acid chain: 3-demethoxyubiquinol 3-hydroxylase (217 aa).

The Fe cation site is built by Glu66, Glu96, His99, Glu148, Glu180, and His183.

Belongs to the COQ7 family. The cofactor is Fe cation.

The protein localises to the cell membrane. It carries out the reaction a 5-methoxy-2-methyl-3-(all-trans-polyprenyl)benzene-1,4-diol + AH2 + O2 = a 3-demethylubiquinol + A + H2O. The protein operates within cofactor biosynthesis; ubiquinone biosynthesis. Functionally, catalyzes the hydroxylation of 2-nonaprenyl-3-methyl-6-methoxy-1,4-benzoquinol during ubiquinone biosynthesis. The sequence is that of 3-demethoxyubiquinol 3-hydroxylase from Xanthomonas campestris pv. campestris (strain 8004).